A 124-amino-acid chain; its full sequence is V-type proton ATPase subunit F 1 (124 aa).

The protein belongs to the V-ATPase F subunit family. As to quaternary structure, V-ATPase is a heteromultimeric enzyme made up of two complexes: the ATP-hydrolytic V1 complex and the proton translocation V0 complex. The V1 complex consists of three catalytic AB heterodimers that form a heterohexamer, three peripheral stalks each consisting of EG heterodimers, one central rotor including subunits D and F, and the regulatory subunits C and H. The proton translocation complex V0 consists of the proton transport subunit a, a ring of proteolipid subunits c9c'', rotary subunit d, subunits e and f, and the accessory subunits VhaAC45 and ATP6AP2.

Functionally, subunit of the V1 complex of vacuolar(H+)-ATPase (V-ATPase), a multisubunit enzyme composed of a peripheral complex (V1) that hydrolyzes ATP and a membrane integral complex (V0) that translocates protons. V-ATPase is responsible for acidifying and maintaining the pH of intracellular compartments and in some cell types, is targeted to the plasma membrane, where it is responsible for acidifying the extracellular environment. The polypeptide is V-type proton ATPase subunit F 1 (Vha14) (Drosophila pseudoobscura pseudoobscura (Fruit fly)).